A 185-amino-acid polypeptide reads, in one-letter code: HTH-type transcriptional repressor OpcR (185 aa).

Positions 49 to 73 (LSELSEATGMSKTRMSQVVREMIDA) form a DNA-binding region, H-T-H motif.

This sequence belongs to the GbsR family.

With respect to regulation, is not choline-responsive. Its function is as follows. Negatively regulates the transcription of the opuC operon. In the absence of GbsR, is also a negative regulator of the opuB operon. Binds to an inverted repeat in the promoter region of the operons. The chain is HTH-type transcriptional repressor OpcR (opcR) from Bacillus subtilis (strain 168).